Reading from the N-terminus, the 69-residue chain is MLYKDIKVSHLMNSNDELQKLVKDFEAELWTLNFKKSVGSLDQSHKIRAIRRDIARIKTELNAREKGAK.

The protein belongs to the universal ribosomal protein uL29 family.

The sequence is that of Large ribosomal subunit protein uL29 from Mycoplasmopsis agalactiae (strain NCTC 10123 / CIP 59.7 / PG2) (Mycoplasma agalactiae).